Here is a 295-residue protein sequence, read N- to C-terminus: Cuticle collagen 3A3 (295 aa).

A disordered region spans residues 81-278; that stretch reads AITSSEENGG…GRPGEPGICP (198 aa). Pro residues-rich tracts occupy residues 97-109 and 146-160; these read PGPP…PGRP and AGPP…PPGD. Triple-helical region regions lie at residues 98–127, 147–203, and 212–277; these read GPPG…PGLP, GPPG…VGED, and GDQG…PGIC. Residues 172–182 show a composition bias toward low complexity; it reads QDGIPGQQGTK. A compositionally biased stretch (pro residues) spans 217–228; the sequence is PGEPGPEGPPGE. Residues 229–244 show a composition bias toward low complexity; it reads PGLQGPVGMPGQVGQK. The span at 261–271 shows a compositional bias: pro residues; sequence RPGPPGPPGRP.

The protein belongs to the cuticular collagen family.

In terms of biological role, nematode cuticles are composed largely of collagen-like proteins. The cuticle functions both as an exoskeleton and as a barrier to protect the worm from its environment. This chain is Cuticle collagen 3A3 (3A3), found in Haemonchus contortus (Barber pole worm).